The sequence spans 315 residues: tRNA-cytidine(32) 2-sulfurtransferase (315 aa).

The PP-loop motif motif lies at 39 to 44 (SGGKDS). 3 residues coordinate [4Fe-4S] cluster: C114, C117, and C205.

The protein belongs to the TtcA family. In terms of assembly, homodimer. Requires Mg(2+) as cofactor. The cofactor is [4Fe-4S] cluster.

Its subcellular location is the cytoplasm. It catalyses the reaction cytidine(32) in tRNA + S-sulfanyl-L-cysteinyl-[cysteine desulfurase] + AH2 + ATP = 2-thiocytidine(32) in tRNA + L-cysteinyl-[cysteine desulfurase] + A + AMP + diphosphate + H(+). It participates in tRNA modification. In terms of biological role, catalyzes the ATP-dependent 2-thiolation of cytidine in position 32 of tRNA, to form 2-thiocytidine (s(2)C32). The sulfur atoms are provided by the cysteine/cysteine desulfurase (IscS) system. In Ralstonia pickettii (strain 12J), this protein is tRNA-cytidine(32) 2-sulfurtransferase.